The primary structure comprises 122 residues: Large ribosomal subunit protein uL14c (122 aa).

Belongs to the universal ribosomal protein uL14 family. As to quaternary structure, part of the 50S ribosomal subunit.

Its subcellular location is the plastid. The protein localises to the chloroplast. Binds to 23S rRNA. The chain is Large ribosomal subunit protein uL14c from Phalaenopsis aphrodite subsp. formosana (Moth orchid).